A 402-amino-acid chain; its full sequence is Tumor necrosis factor receptor superfamily member 11B (402 aa).

The first 21 residues, methionine 1–glutamine 21, serve as a signal peptide directing secretion. TNFR-Cys repeat units lie at residues phenylalanine 24–cysteine 62, proline 64–cysteine 105, glutamate 106–cysteine 142, and arginine 144–cysteine 185. Intrachain disulfides connect cysteine 41–cysteine 54, cysteine 44–cysteine 62, cysteine 65–cysteine 80, cysteine 83–cysteine 97, cysteine 87–cysteine 105, cysteine 107–cysteine 118, cysteine 124–cysteine 142, and cysteine 145–cysteine 160. N-linked (GlcNAc...) asparagine glycosylation is found at asparagine 165 and asparagine 178. Cysteine 166 and cysteine 185 form a disulfide bridge. 2 Death domains span residues isoleucine 198 to lysine 269 and lysine 270 to serine 365.

In terms of assembly, homodimer. Interacts with TNFSF10 and TNFSF11. N-glycosylated. Contains sialic acid residues.

Its subcellular location is the secreted. Functionally, acts as a decoy receptor for TNFSF11/RANKL and thereby neutralizes its function in osteoclastogenesis. Inhibits the activation of osteoclasts and promotes osteoclast apoptosis. Bone homeostasis seems to depend on the local ratio between TNFSF11 and TNFRSF11B. May also play a role in preventing arterial calcification. May act as decoy receptor for TNFSF10/TRAIL and protect against apoptosis. TNFSF10/TRAIL binding blocks the inhibition of osteoclastogenesis. This is Tumor necrosis factor receptor superfamily member 11B (TNFRSF11B) from Bos taurus (Bovine).